A 783-amino-acid polypeptide reads, in one-letter code: Tripartite motif-containing protein 67 (783 aa).

An RING-type; degenerate zinc finger spans residues 7–42 (CPVCGSLFREPIILPCSHNVCLPCARTIAVQTPDGE). The B box-type 1; degenerate zinc-finger motif lies at 206–253 (AICQLCDRTPPEPAATLCEQCDVLYCSACQLKCHPSRGPFAKHRLVQP). The tract at residues 247–295 (KHRLVQPPPPPPPPAEAASGPTGTAQGAPSGGGGCKSPGGAGAGATGGS) is disordered. Over residues 252 to 261 (QPPPPPPPPA) the composition is skewed to pro residues. Positions 275-293 (PSGGGGCKSPGGAGAGATG) are enriched in gly residues. A B box-type 2 zinc finger spans residues 298–340 (RKFPTCPEHEMENYSMYCVSCRTPVCYLCLEEGRHAKHEVKPL). Positions 303, 306, 326, and 332 each coordinate Zn(2+). A coiled-coil region spans residues 345 to 382 (KQHKAQLSQALNGVSDKAKEAKEFLVQLKNILQQIQEN). A COS domain is found at 448–506 (IKENDPSGFLQISDALIKRVQVSQEQWVKGALEPKVSAEFDLTLDSEPLLQAIHQLDFI). Residues 513–607 (PPVPLLQLEK…KTVVLQTSDV (95 aa)) enclose the Fibronectin type-III domain. The region spanning 589–780 (NSSGVGPYSK…VPTNLGRPKL (192 aa)) is the B30.2/SPRY domain.

This sequence belongs to the TRIM/RBCC family.

It is found in the cytoplasm. The protein resides in the cytoskeleton. The sequence is that of Tripartite motif-containing protein 67 (TRIM67) from Homo sapiens (Human).